Reading from the N-terminus, the 437-residue chain is Glutamate-1-semialdehyde 2,1-aminomutase (437 aa).

Position 273 is an N6-(pyridoxal phosphate)lysine (Lys273).

The protein belongs to the class-III pyridoxal-phosphate-dependent aminotransferase family. HemL subfamily. Homodimer. Requires pyridoxal 5'-phosphate as cofactor.

The protein resides in the cytoplasm. It catalyses the reaction (S)-4-amino-5-oxopentanoate = 5-aminolevulinate. It participates in porphyrin-containing compound metabolism; protoporphyrin-IX biosynthesis; 5-aminolevulinate from L-glutamyl-tRNA(Glu): step 2/2. This Chlamydia felis (strain Fe/C-56) (Chlamydophila felis) protein is Glutamate-1-semialdehyde 2,1-aminomutase.